Reading from the N-terminus, the 149-residue chain is SKP1-like protein 14 (149 aa).

The interaction with the F-box domain of F-box proteins stretch occupies residues 91–149; that stretch reads LLAANYLNIKGLLDLSAQTVADRIKDKTPEEIREIFNIENDFTPEEEAAVRKENAWAFE.

It belongs to the SKP1 family. As to quaternary structure, part of a SCF (SKP1-cullin-F-box) protein ligase complex. Interacts with CPR1/CPR30, At3g61590, At4g39550 and At5g49610. Restricted to inflorescences, pollen and leaves.

Its subcellular location is the nucleus. Its pathway is protein modification; protein ubiquitination. Its function is as follows. Involved in ubiquitination and subsequent proteasomal degradation of target proteins. Together with CUL1, RBX1 and a F-box protein, it forms a SCF E3 ubiquitin ligase complex. The functional specificity of this complex depends on the type of F-box protein. In the SCF complex, it serves as an adapter that links the F-box protein to CUL1. This is SKP1-like protein 14 (ASK14) from Arabidopsis thaliana (Mouse-ear cress).